Here is a 634-residue protein sequence, read N- to C-terminus: UPF0329 protein ECU07_1850/ECU10_0050 (634 aa).

Composition is skewed to basic and acidic residues over residues 354–365 (REEREKREESKG) and 397–407 (GESKEEDRGEE). The segment at 354–438 (REEREKREES…KGSGEKRISE (85 aa)) is disordered. Acidic residues predominate over residues 408-417 (GGVEAEDPLE).

The protein belongs to the UPF0329 family.

In Encephalitozoon cuniculi (strain GB-M1) (Microsporidian parasite), this protein is UPF0329 protein ECU07_1850/ECU10_0050.